The sequence spans 335 residues: Ketol-acid reductoisomerase (NADP(+)) (335 aa).

The KARI N-terminal Rossmann domain maps to 5–185 (SKIYTDKDSN…GATRAGVIPT (181 aa)). NADP(+)-binding positions include 28–31 (YGSQ), S56, and 86–89 (DMVQ). H111 is a catalytic residue. Position 137 (G137) interacts with NADP(+). The region spanning 186–331 (TFKEETETDL…NQLKDLIQKG (146 aa)) is the KARI C-terminal knotted domain. Mg(2+) is bound by residues D194, E198, E230, and E234. S255 is a binding site for substrate.

It belongs to the ketol-acid reductoisomerase family. It depends on Mg(2+) as a cofactor.

The enzyme catalyses (2R)-2,3-dihydroxy-3-methylbutanoate + NADP(+) = (2S)-2-acetolactate + NADPH + H(+). The catalysed reaction is (2R,3R)-2,3-dihydroxy-3-methylpentanoate + NADP(+) = (S)-2-ethyl-2-hydroxy-3-oxobutanoate + NADPH + H(+). It participates in amino-acid biosynthesis; L-isoleucine biosynthesis; L-isoleucine from 2-oxobutanoate: step 2/4. Its pathway is amino-acid biosynthesis; L-valine biosynthesis; L-valine from pyruvate: step 2/4. In terms of biological role, involved in the biosynthesis of branched-chain amino acids (BCAA). Catalyzes an alkyl-migration followed by a ketol-acid reduction of (S)-2-acetolactate (S2AL) to yield (R)-2,3-dihydroxy-isovalerate. In the isomerase reaction, S2AL is rearranged via a Mg-dependent methyl migration to produce 3-hydroxy-3-methyl-2-ketobutyrate (HMKB). In the reductase reaction, this 2-ketoacid undergoes a metal-dependent reduction by NADPH to yield (R)-2,3-dihydroxy-isovalerate. The chain is Ketol-acid reductoisomerase (NADP(+)) from Saccharolobus islandicus (strain L.S.2.15 / Lassen #1) (Sulfolobus islandicus).